We begin with the raw amino-acid sequence, 225 residues long: Probable septum site-determining protein MinC (225 aa).

This sequence belongs to the MinC family. As to quaternary structure, interacts with MinD and FtsZ.

Its function is as follows. Cell division inhibitor that blocks the formation of polar Z ring septums. Rapidly oscillates between the poles of the cell to destabilize FtsZ filaments that have formed before they mature into polar Z rings. Prevents FtsZ polymerization. This is Probable septum site-determining protein MinC from Listeria monocytogenes serotype 4b (strain CLIP80459).